The primary structure comprises 417 residues: Pigment epithelium-derived factor (417 aa).

Positions methionine 1–serine 19 are cleaved as a signal peptide. The segment at glycine 17–glutamate 41 is disordered. A compositionally biased stretch (polar residues) spans serine 18–glycine 28. Position 20 is a pyrrolidone carboxylic acid (glutamine 20). Serine 24 bears the Phosphoserine mark. Asparagine 284 carries an N-linked (GlcNAc...) asparagine glycan.

It belongs to the serpin family. Interacts with PNPLA2; this interaction stimulates the phospholipase A2 activity of PNPLA2. As to expression, highly expressed in the liver, gastric glandular mucosa and renal tubules. It is also expressed in the brain, heart, lung retina and testes.

Its subcellular location is the secreted. The protein resides in the melanosome. Functionally, neurotrophic protein; induces extensive neuronal differentiation in retinoblastoma cells. Potent inhibitor of angiogenesis. As it does not undergo the S (stressed) to R (relaxed) conformational transition characteristic of active serpins, it exhibits no serine protease inhibitory activity. The protein is Pigment epithelium-derived factor (Serpinf1) of Mus musculus (Mouse).